The chain runs to 335 residues: Interleukin-12 subunit beta (335 aa).

The N-terminal stretch at 1–22 (MCPQKLTISWFAIVLLVSPLMA) is a signal peptide. Residues 23–106 (MWELEKDVYV…LSHSHLLLHK (84 aa)) enclose the Ig-like C2-type domain. Asn47 carries N-linked (GlcNAc...) asparagine glycosylation. Residues Cys50 and Cys90 are joined by a disulfide bond. 3 N-linked (GlcNAc...) asparagine glycosylation sites follow: Asn122, Asn132, and Asn220. A Fibronectin type-III domain is found at 233 to 324 (PDPPKNLQMK…QDRYYNSSCS (92 aa)).

The protein belongs to the IL-12B family. Heterodimer with IL12A; disulfide-linked. The heterodimer is known as interleukin IL-12. Heterodimer with IL23A; disulfide-linked. The heterodimer is known as interleukin IL-23. Also secreted as a monomer. Interacts with NBR1; this interaction promotes IL-12 secretion.

The protein localises to the secreted. Cytokine that can act as a growth factor for activated T and NK cells, enhance the lytic activity of NK/lymphokine-activated killer cells, and stimulate the production of IFN-gamma by resting PBMC. Its function is as follows. Associates with IL23A to form the IL-23 interleukin, a heterodimeric cytokine which functions in innate and adaptive immunity. IL-23 may constitute with IL-17 an acute response to infection in peripheral tissues. IL-23 binds to a heterodimeric receptor complex composed of IL12RB1 and IL23R, activates the Jak-Stat signaling cascade, stimulates memory rather than naive T-cells and promotes production of pro-inflammatory cytokines. IL-23 induces autoimmune inflammation and thus may be responsible for autoimmune inflammatory diseases and may be important for tumorigenesis. This is Interleukin-12 subunit beta (Il12b) from Mus musculus (Mouse).